The chain runs to 588 residues: Aspartate--tRNA ligase (588 aa).

L-aspartate is bound at residue E172. The interval 196–199 (QLFK) is aspartate. R218 contributes to the L-aspartate binding site. ATP is bound by residues 218–220 (RDE) and Q227. H449 is a binding site for L-aspartate. An ATP-binding site is contributed by E483. R490 lines the L-aspartate pocket. Residue 535 to 538 (GLDR) coordinates ATP.

Belongs to the class-II aminoacyl-tRNA synthetase family. Type 1 subfamily. Homodimer.

Its subcellular location is the cytoplasm. It carries out the reaction tRNA(Asp) + L-aspartate + ATP = L-aspartyl-tRNA(Asp) + AMP + diphosphate. Its function is as follows. Catalyzes the attachment of L-aspartate to tRNA(Asp) in a two-step reaction: L-aspartate is first activated by ATP to form Asp-AMP and then transferred to the acceptor end of tRNA(Asp). The sequence is that of Aspartate--tRNA ligase from Haemophilus influenzae (strain 86-028NP).